Reading from the N-terminus, the 396-residue chain is DNA polymerase processivity factor (396 aa).

Positions 306–396 (AEGGESSQKV…VPKTTFNPLI (91 aa)) are disordered. The span at 376 to 386 (SDSSQSRDRGK) shows a compositional bias: basic and acidic residues.

It belongs to the herpesviridae DNA polymerase accessory subunit family. As to quaternary structure, homooligomerizes and adopts an oligomeric ring-shaped structure composed of 6 subunits. Forms a complex with the DNA-binding protein, the DNA polymerase subunit, and the alkaline exonuclease.

The protein localises to the virion tegument. The protein resides in the host nucleus. Plays an essential role in the viral lytic DNA replication by acting as the polymerase accessory subunit. Stimulates the viral DNA polymerase activity and appears to function with it as a holoenzyme. Increases the processivity of the viral polymerase, probably by acting as a sliding clamp that prevents dissociation of the polymerase from the active template. This is DNA polymerase processivity factor (ORF59) from Homo sapiens (Human).